The following is a 212-amino-acid chain: Large ribosomal subunit protein uL1 (212 aa).

It belongs to the universal ribosomal protein uL1 family. In terms of assembly, part of the 50S ribosomal subunit.

Its function is as follows. Binds directly to 23S rRNA. Probably involved in E site tRNA release. Functionally, protein L1 is also a translational repressor protein, it controls the translation of its operon by binding to its mRNA. This is Large ribosomal subunit protein uL1 from Haloferax volcanii (strain ATCC 29605 / DSM 3757 / JCM 8879 / NBRC 14742 / NCIMB 2012 / VKM B-1768 / DS2) (Halobacterium volcanii).